The primary structure comprises 180 residues: QDWFHGRCVTVPRLLSSQRPGFTSSPLLAWWEWDTKFLCPLCMRSRRPRLETILALLVALQRLPVRLPEGEALQCLTERAISWQGRARQVLASEEVTALLGRLAELRQRLQAESKPEESLAYSSDAGEGAGHIPKVQGLLENGDSVTSPEKVATEEGSGKRDLELLSSLLPQLTGPVLEL.

Residues 116-159 (PEESLAYSSDAGEGAGHIPKVQGLLENGDSVTSPEKVATEEGSG) are disordered. Ser-148 bears the Phosphoserine mark.

It belongs to the JARID1 histone demethylase family. As to quaternary structure, part of two distinct complexes, one containing E2F6, and the other containing REST. Interacts with ZMYND8. It depends on Fe(2+) as a cofactor.

It localises to the nucleus. The catalysed reaction is N(6),N(6),N(6)-trimethyl-L-lysyl(4)-[histone H3] + 3 2-oxoglutarate + 3 O2 = L-lysyl(4)-[histone H3] + 3 formaldehyde + 3 succinate + 3 CO2. Its function is as follows. Histone demethylase that specifically demethylates 'Lys-4' of histone H3, thereby playing a central role in histone code. Does not demethylate histone H3 'Lys-9', H3 'Lys-27', H3 'Lys-36', H3 'Lys-79' or H4 'Lys-20'. Demethylates trimethylated and dimethylated but not monomethylated H3 'Lys-4'. Participates in transcriptional repression of neuronal genes by recruiting histone deacetylases and REST at neuron-restrictive silencer elements. Represses the CLOCK-BMAL1 heterodimer-mediated transcriptional activation of the core clock component PER2. The sequence is that of Lysine-specific demethylase 5C (KDM5C) from Cricetulus griseus (Chinese hamster).